Consider the following 446-residue polypeptide: Maltoporin (446 aa).

The N-terminal stretch at 1-25 (MMITLRKLPLAVAVAAGVMSAQAMA) is a signal peptide.

It belongs to the porin LamB (TC 1.B.3) family. As to quaternary structure, homotrimer formed of three 18-stranded antiparallel beta-barrels, containing three independent channels.

It localises to the cell outer membrane. The enzyme catalyses beta-maltose(in) = beta-maltose(out). In terms of biological role, involved in the transport of maltose and maltodextrins. In Escherichia coli O127:H6 (strain E2348/69 / EPEC), this protein is Maltoporin.